The sequence spans 807 residues: Probable phosphoketolase (807 aa).

This sequence belongs to the XFP family. The cofactor is thiamine diphosphate.

The sequence is that of Probable phosphoketolase from Mesorhizobium japonicum (strain LMG 29417 / CECT 9101 / MAFF 303099) (Mesorhizobium loti (strain MAFF 303099)).